The chain runs to 86 residues: Neurotoxin 3FTx-RK (86 aa).

The first 21 residues, 1 to 21 (MKTLLLTLVVVTIVCLELGYT), serve as a signal peptide directing secretion. Cystine bridges form between Cys-24-Cys-45, Cys-38-Cys-63, Cys-67-Cys-78, and Cys-79-Cys-84.

Expressed by the venom gland.

It localises to the secreted. In Bungarus fasciatus (Banded krait), this protein is Neurotoxin 3FTx-RK.